The chain runs to 171 residues: Large ribosomal subunit protein bL9 (171 aa).

The protein belongs to the bacterial ribosomal protein bL9 family.

Functionally, binds to the 23S rRNA. The protein is Large ribosomal subunit protein bL9 of Rickettsia canadensis (strain McKiel).